The following is a 120-amino-acid chain: MGSMTLLFFVEHVFIFCMIFWLLTWVAEYFFKSKNNKQKHQFYECGIRALSELNIQINLNFSIVCVFLILYDVEFIFMYPFFFNFFLVNAGAFLVFFVFLFFVFYSLVYDSVQNSLALQL.

Helical transmembrane passes span 6–26 (LLFF…LTWV), 63–83 (IVCV…PFFF), and 85–105 (FFLV…FVFY).

It belongs to the complex I subunit 3 family.

It localises to the mitochondrion membrane. The catalysed reaction is a ubiquinone + NADH + 5 H(+)(in) = a ubiquinol + NAD(+) + 4 H(+)(out). Its function is as follows. Core subunit of the mitochondrial membrane respiratory chain NADH dehydrogenase (Complex I) that is believed to belong to the minimal assembly required for catalysis. Complex I functions in the transfer of electrons from NADH to the respiratory chain. The immediate electron acceptor for the enzyme is believed to be ubiquinone. The polypeptide is NADH-ubiquinone oxidoreductase chain 3 (ND3) (Paramecium tetraurelia).